We begin with the raw amino-acid sequence, 204 residues long: Pyrrolidone-carboxylate peptidase (204 aa).

Active-site residues include Glu80, Cys142, and His165.

The protein belongs to the peptidase C15 family. In terms of assembly, homotetramer.

It is found in the cytoplasm. The enzyme catalyses Release of an N-terminal pyroglutamyl group from a polypeptide, the second amino acid generally not being Pro.. Removes 5-oxoproline from various penultimate amino acid residues except L-proline. In Lysinibacillus sphaericus (strain C3-41), this protein is Pyrrolidone-carboxylate peptidase.